Here is a 172-residue protein sequence, read N- to C-terminus: Small ribosomal subunit protein uS5 (172 aa).

Residues 16 to 79 (LKEKLVHINR…EDGKKNVIKV (64 aa)) enclose the S5 DRBM domain.

It belongs to the universal ribosomal protein uS5 family. Part of the 30S ribosomal subunit. Contacts proteins S4 and S8.

Functionally, with S4 and S12 plays an important role in translational accuracy. Located at the back of the 30S subunit body where it stabilizes the conformation of the head with respect to the body. This chain is Small ribosomal subunit protein uS5, found in Pelodictyon phaeoclathratiforme (strain DSM 5477 / BU-1).